Here is a 338-residue protein sequence, read N- to C-terminus: UDP-3-O-acylglucosamine N-acyltransferase (338 aa).

His239 functions as the Proton acceptor in the catalytic mechanism.

Belongs to the transferase hexapeptide repeat family. LpxD subfamily. As to quaternary structure, homotrimer.

The enzyme catalyses a UDP-3-O-[(3R)-3-hydroxyacyl]-alpha-D-glucosamine + a (3R)-hydroxyacyl-[ACP] = a UDP-2-N,3-O-bis[(3R)-3-hydroxyacyl]-alpha-D-glucosamine + holo-[ACP] + H(+). The protein operates within bacterial outer membrane biogenesis; LPS lipid A biosynthesis. In terms of biological role, catalyzes the N-acylation of UDP-3-O-acylglucosamine using 3-hydroxyacyl-ACP as the acyl donor. Is involved in the biosynthesis of lipid A, a phosphorylated glycolipid that anchors the lipopolysaccharide to the outer membrane of the cell. The chain is UDP-3-O-acylglucosamine N-acyltransferase from Xylella fastidiosa (strain M12).